The primary structure comprises 801 residues: Lon protease 2 (801 aa).

The 196-residue stretch at 14 to 209 (LPMLPVRDIV…LVNEILAAEL (196 aa)) folds into the Lon N-terminal domain. An ATP-binding site is contributed by 361–368 (GPPGVGKT). The Lon proteolytic domain maps to 597 to 778 (DSQVGVVQGL…DEVFAVAFDK (182 aa)). Residues serine 684 and lysine 727 contribute to the active site. Residues 780–791 (AKGQEKKPAAKK) are compositionally biased toward basic and acidic residues. Residues 780–801 (AKGQEKKPAAKKDPKKTKSLAA) form a disordered region. Residues 792 to 801 (DPKKTKSLAA) show a composition bias toward basic residues.

The protein belongs to the peptidase S16 family. Homohexamer. Organized in a ring with a central cavity.

Its subcellular location is the cytoplasm. The catalysed reaction is Hydrolysis of proteins in presence of ATP.. ATP-dependent serine protease that mediates the selective degradation of mutant and abnormal proteins as well as certain short-lived regulatory proteins. Required for cellular homeostasis and for survival from DNA damage and developmental changes induced by stress. Degrades polypeptides processively to yield small peptide fragments that are 5 to 10 amino acids long. Binds to DNA in a double-stranded, site-specific manner. In Bdellovibrio bacteriovorus (strain ATCC 15356 / DSM 50701 / NCIMB 9529 / HD100), this protein is Lon protease 2.